The primary structure comprises 346 residues: Phosphoribosylformylglycinamidine cyclo-ligase (346 aa).

Belongs to the AIR synthase family.

The protein localises to the cytoplasm. It catalyses the reaction 2-formamido-N(1)-(5-O-phospho-beta-D-ribosyl)acetamidine + ATP = 5-amino-1-(5-phospho-beta-D-ribosyl)imidazole + ADP + phosphate + H(+). The protein operates within purine metabolism; IMP biosynthesis via de novo pathway; 5-amino-1-(5-phospho-D-ribosyl)imidazole from N(2)-formyl-N(1)-(5-phospho-D-ribosyl)glycinamide: step 2/2. In Shewanella halifaxensis (strain HAW-EB4), this protein is Phosphoribosylformylglycinamidine cyclo-ligase.